The following is a 206-amino-acid chain: Ribonuclease HII (206 aa).

The region spanning 14-206 is the RNase H type-2 domain; it reads EFICGIDEVG…FKLRQLGEKV (193 aa). Asp-20, Glu-21, and Asp-117 together coordinate a divalent metal cation.

This sequence belongs to the RNase HII family. The cofactor is Mn(2+). Mg(2+) is required as a cofactor.

It is found in the cytoplasm. It catalyses the reaction Endonucleolytic cleavage to 5'-phosphomonoester.. Endonuclease that specifically degrades the RNA of RNA-DNA hybrids. This is Ribonuclease HII from Chlorobium chlorochromatii (strain CaD3).